The following is a 248-amino-acid chain: Triosephosphate isomerase (248 aa).

Substrate-binding residues include N10 and K12. The active-site Electrophile is H95. E165 (proton acceptor) is an active-site residue.

This sequence belongs to the triosephosphate isomerase family. As to quaternary structure, homodimer.

It carries out the reaction D-glyceraldehyde 3-phosphate = dihydroxyacetone phosphate. Its pathway is carbohydrate biosynthesis; gluconeogenesis. It functions in the pathway carbohydrate degradation; glycolysis; D-glyceraldehyde 3-phosphate from glycerone phosphate: step 1/1. The sequence is that of Triosephosphate isomerase (TPI1) from Zygosaccharomyces bailii.